The primary structure comprises 292 residues: Protease HtpX (292 aa).

Helical transmembrane passes span 4–24 (IALF…VLSL) and 34–54 (GLMI…LLMS). His139 serves as a coordination point for Zn(2+). Residue Glu140 is part of the active site. His143 is a Zn(2+) binding site. 2 helical membrane-spanning segments follow: residues 158 to 178 (IVNT…AGFL) and 192 to 212 (MIYF…ASII). Glu221 is a Zn(2+) binding site.

The protein belongs to the peptidase M48B family. Zn(2+) is required as a cofactor.

Its subcellular location is the cell inner membrane. In Serratia proteamaculans (strain 568), this protein is Protease HtpX.